Reading from the N-terminus, the 135-residue chain is D-ribose pyranase (135 aa).

Catalysis depends on His20, which acts as the Proton donor. Substrate contacts are provided by residues Asp28, His102, and 124 to 126; that span reads YSN.

Belongs to the RbsD / FucU family. RbsD subfamily. In terms of assembly, homodecamer.

It is found in the cytoplasm. It catalyses the reaction beta-D-ribopyranose = beta-D-ribofuranose. It participates in carbohydrate metabolism; D-ribose degradation; D-ribose 5-phosphate from beta-D-ribopyranose: step 1/2. Functionally, catalyzes the interconversion of beta-pyran and beta-furan forms of D-ribose. This Thermotoga maritima (strain ATCC 43589 / DSM 3109 / JCM 10099 / NBRC 100826 / MSB8) protein is D-ribose pyranase.